A 361-amino-acid polypeptide reads, in one-letter code: Porphobilinogen deaminase (361 aa).

At C265 the chain carries S-(dipyrrolylmethanemethyl)cysteine. The interval 341 to 361 (LPPSSNTPTPQPITPITTNNS) is disordered.

This sequence belongs to the HMBS family. Requires dipyrromethane as cofactor.

It carries out the reaction 4 porphobilinogen + H2O = hydroxymethylbilane + 4 NH4(+). It functions in the pathway porphyrin-containing compound metabolism; protoporphyrin-IX biosynthesis; coproporphyrinogen-III from 5-aminolevulinate: step 2/4. In terms of biological role, tetrapolymerization of the monopyrrole PBG into the hydroxymethylbilane pre-uroporphyrinogen in several discrete steps. The polypeptide is Porphobilinogen deaminase (HEM3) (Debaryomyces hansenii (strain ATCC 36239 / CBS 767 / BCRC 21394 / JCM 1990 / NBRC 0083 / IGC 2968) (Yeast)).